Here is a 230-residue protein sequence, read N- to C-terminus: Large ribosomal subunit protein uL1 (230 aa).

It belongs to the universal ribosomal protein uL1 family. Part of the 50S ribosomal subunit.

Binds directly to 23S rRNA. The L1 stalk is quite mobile in the ribosome, and is involved in E site tRNA release. In terms of biological role, protein L1 is also a translational repressor protein, it controls the translation of the L11 operon by binding to its mRNA. This is Large ribosomal subunit protein uL1 from Limosilactobacillus reuteri subsp. reuteri (strain JCM 1112) (Lactobacillus reuteri).